The following is a 375-amino-acid chain: Phosphoglucan phosphatase DSP4, amyloplastic (375 aa).

The transit peptide at 1–42 directs the protein to the amyloplast; that stretch reads MFCVQNLPRSSALPLQSFKSHQRRPPCSVNTLGVMSNVNLHR. A disordered region spans residues 49 to 71; sequence ISGPTSSAETSDANVEEEKSETY. Polar residues predominate over residues 51-61; sequence GPTSSAETSDA. The Tyrosine-protein phosphatase domain maps to 92 to 249; the sequence is NYNFIRPDLI…AADILTGLRK (158 aa). C193 acts as the Phosphocysteine intermediate in catalysis. A substrate-binding site is contributed by 194-199; that stretch reads TAGLGR. The polysaccharide binding stretch occupies residues 254 to 330; the sequence is LTWKNPDCTT…NKDGHVNNFV (77 aa).

As to expression, expressed in phloem parenchyma of 16-24 week old seedlings and 2 year old trees (at protein level). Expressed in leaves of 16-24 week old seedlings and 2 year old trees.

It localises to the plastid. The protein localises to the amyloplast. Its subcellular location is the nucleus. Starch granule-associated phosphoglucan phosphatase involved in the control of starch accumulation. Acts as a major regulator of the initial steps of starch degradation at the granule surface. Functions during the day by dephosphorylating the night-accumulated phospho-oligosaccharides. Can release phosphate from both the C6 and the C3 positions. The protein is Phosphoglucan phosphatase DSP4, amyloplastic of Castanea sativa (Sweet chestnut).